The primary structure comprises 112 residues: Protein ORF3 (112 aa).

Hydrophobic regions lie at residues 7–23 (ALGLFCFCSSCFCLCCP) and 40–60 (AAVVSGVTGLILSPSPSPIFI). Residues 28 to 66 (VSRLAVAAGKRGAAVVSGVTGLILSPSPSPIFIQPTPSH) form an interaction with host HPX region. The interval 70–112 (QPPPGLELALGSQSVHSAPLGVTSPSAPPLPPVVDLPQLGLRR) is homodimerization, and interaction with host AMBP/bikunin. The interval 89-112 (LGVTSPSAPPLPPVVDLPQLGLRR) is disordered. The interaction with host SRC, HCK, FYN, PIK3R3 and GRB2 stretch occupies residues 93–102 (SPSAPPLPPV). Residues 94-97 (PSAP) carry the PTAP/PSAP motif motif.

Belongs to the hepevirus ORF3 protein family. Forms homooligomers. Interacts with host SRC, HCK, FYN, PIK3R3 and GRB2 (via SH3 domain); binding does not activate the kinases. Interacts with host AMBP/bikunin and AMBP/alpha-1-microglobulin peptides. Interacts with host HPX/hemopexin. Interacts (when phosphorylated) with capsid protein ORF2. Interacts with host TSG101; this interaction plays a role in viral release from the host cell. Interacts with host SIRPA; this interaction down-regulates the phosphorylation of host IRF3. In terms of processing, palmitoylated in the N-terminus.

It is found in the host endoplasmic reticulum membrane. It localises to the host cytoplasm. The protein localises to the host cytoskeleton. Its subcellular location is the virion. The protein resides in the host cell membrane. In terms of biological role, small multifunctional phosphoprotein involved in virion morphogenesis, egress and counteracting host innate immunity. Plays critical roles in the final steps of viral release by interacting with host TSG101, a member of the vacuolar protein-sorting pathway and using other cellular host proteins involved in vesicle formation pathway. Also acts as a viroporin and forms ion conductive pores allowing viral particle release. Impairs the generation of type I interferon by down-regulating host TLR3 and TLR7 as well as their downstream signaling pathways. Down-regulates the phosphorylation of host IRF3 via the interaction with host SIRP-alpha, thereby inhibiting IFN-I expression. Interacts with host microtubules. In Bandicota bengalensis (lesser bandicoot rat), this protein is Protein ORF3.